Consider the following 283-residue polypeptide: NAD kinase (283 aa).

Catalysis depends on Asp-66, which acts as the Proton acceptor. Residues 66–67 (DG), 140–141 (ND), Arg-151, Lys-168, Asp-170, 181–186 (TGYCLS), and Gln-240 each bind NAD(+).

It belongs to the NAD kinase family. A divalent metal cation serves as cofactor.

The protein localises to the cytoplasm. It catalyses the reaction NAD(+) + ATP = ADP + NADP(+) + H(+). In terms of biological role, involved in the regulation of the intracellular balance of NAD and NADP, and is a key enzyme in the biosynthesis of NADP. Catalyzes specifically the phosphorylation on 2'-hydroxyl of the adenosine moiety of NAD to yield NADP. The polypeptide is NAD kinase (Geobacter metallireducens (strain ATCC 53774 / DSM 7210 / GS-15)).